Here is a 170-residue protein sequence, read N- to C-terminus: Acetyl-CoA decarbonylase/synthase complex subunit epsilon 1 (170 aa).

The protein belongs to the CdhB family. As to quaternary structure, heterotetramer of two alpha and two epsilon subunits. The ACDS complex is made up of alpha, epsilon, beta, gamma and delta subunits with a probable stoichiometry of (alpha(2)epsilon(2))(4)-beta(8)-(gamma(1)delta(1))(8).

The protein operates within one-carbon metabolism; methanogenesis from acetate. Its function is as follows. Part of a complex that catalyzes the reversible cleavage of acetyl-CoA, allowing growth on acetate as sole source of carbon and energy. The alpha-epsilon subcomponent functions as a carbon monoxide dehydrogenase. The precise role of the epsilon subunit is unclear; it may have a stabilizing role within the alpha(2)epsilon(2) component and/or be involved in electron transfer to FAD during a potential FAD-mediated CO oxidation. The chain is Acetyl-CoA decarbonylase/synthase complex subunit epsilon 1 (cdhB1) from Methanosarcina mazei (strain ATCC BAA-159 / DSM 3647 / Goe1 / Go1 / JCM 11833 / OCM 88) (Methanosarcina frisia).